Here is a 1236-residue protein sequence, read N- to C-terminus: DNA topoisomerase 2 (1236 aa).

Residues Asn-65, Asn-96, 124–126 (SSN), 137–144 (GRHGYGAK), and 354–356 (QSK) contribute to the ATP site. In terms of domain architecture, Toprim spans 434-548 (RTLIITEGDS…KLLQNNPGYI (115 aa)). Positions 440, 517, and 519 each coordinate Mg(2+). The 417-residue stretch at 685-1101 (IPHCVDGLKP…TPVKMWLTEL (417 aa)) folds into the Topo IIA-type catalytic domain. Catalysis depends on Tyr-775, which acts as the O-(5'-phospho-DNA)-tyrosine intermediate. Positions 956 to 965 (ALAQRIYING) are interaction with DNA. A disordered region spans residues 1161 to 1211 (YEKPPPSKRRPGESVGGARPSDSAARTVGKRLVGSRSEFKNKKPMSRKNNV).

It belongs to the type II topoisomerase family. In terms of assembly, homodimer. Mg(2+) serves as cofactor. The cofactor is Mn(2+). Requires Ca(2+) as cofactor.

The protein localises to the nucleus. It carries out the reaction ATP-dependent breakage, passage and rejoining of double-stranded DNA.. Its function is as follows. Control of topological states of DNA by transient breakage and subsequent rejoining of DNA strands. Topoisomerase II makes double-strand breaks. This is DNA topoisomerase 2 (TOP2) from Leishmania chagasi.